A 628-amino-acid polypeptide reads, in one-letter code: 3-hydroxy-3-methylglutaryl-coenzyme A reductase 2 (628 aa).

Helical transmembrane passes span 38–58 (PLYL…YFLL) and 78–98 (EIVA…FFGI). The tract at residues 99–212 (DFVQSLIIRP…HEKTVIVTTE (114 aa)) is linker. N-linked (GlcNAc...) asparagine glycosylation occurs at Asn153. The segment at 213–628 (EDEEIIKSVV…SSKDMSNLSS (416 aa)) is catalytic. Glu307 acts as the Charge relay system in catalysis. Residue Asn371 is glycosylated (N-linked (GlcNAc...) asparagine). Lys439 acts as the Charge relay system in catalysis. Asn484 is a glycosylation site (N-linked (GlcNAc...) asparagine). Asp515 acts as the Charge relay system in catalysis. His613 acts as the Proton donor in catalysis. 2 N-linked (GlcNAc...) asparagine glycosylation sites follow: Asn617 and Asn625.

This sequence belongs to the HMG-CoA reductase family.

The protein localises to the endoplasmic reticulum membrane. It localises to the mitochondrion membrane. The protein resides in the plastid membrane. The enzyme catalyses (R)-mevalonate + 2 NADP(+) + CoA = (3S)-3-hydroxy-3-methylglutaryl-CoA + 2 NADPH + 2 H(+). It functions in the pathway metabolic intermediate biosynthesis; (R)-mevalonate biosynthesis; (R)-mevalonate from acetyl-CoA: step 3/3. Functionally, catalyzes the synthesis of mevalonate. The specific precursor of all isoprenoid compounds present in plants. This Gossypium hirsutum (Upland cotton) protein is 3-hydroxy-3-methylglutaryl-coenzyme A reductase 2 (HMG2).